A 333-amino-acid polypeptide reads, in one-letter code: Eukaryotic translation initiation factor 2 subunit 2 (333 aa).

Disordered regions lie at residues 1–120 and 139–165; these read MSGD…LDIM and ILEK…QTGP. N-acetylserine is present on Ser-2. Phosphoserine is present on Ser-2. Ser-13 is subject to Phosphoserine; by PKC; in vitro. The segment covering 13 to 22 has biased composition (basic residues); the sequence is SKKKKKKKKP. At Thr-36 the chain carries Phosphothreonine. Residues 40 to 51 show a composition bias toward basic and acidic residues; the sequence is ETKEVEPEPTED. Ser-67 is subject to Phosphoserine; by CK2. The segment covering 96–105 has biased composition (basic and acidic residues); sequence EGVKDLKIEN. Lys-102 is covalently cross-linked (Glycyl lysine isopeptide (Lys-Gly) (interchain with G-Cter in SUMO2)). Acidic residues-rich tracts occupy residues 106–118 and 139–149; these read DVQE…DDLD and ILEKDEALEDE. Ser-158 bears the Phosphoserine mark. Ser-218 carries the phosphoserine; by PKA; in vitro modification. Lys-265 and Lys-293 each carry N6-acetyllysine. The C4-type zinc-finger motif lies at 281-305; that stretch reads CHTCRSPDTILQKDTRLYFLQCETC.

The protein belongs to the eIF-2-beta/eIF-5 family. Eukaryotic translation initiation factor 2 eIF2 is a heterotrimeric complex composed of an alpha (EIF2S1), a beta (EIF2S2) and a gamma (EIF2S3) chain. eIF2 is member of the 43S pre-initiation complex (43S PIC). eIF2 forms a complex with at least CELF1/CUGBP1, CALR, CALR3, EIF2S1, EIF2S2, HSP90B1 and HSPA5. Interacts with BZW2/5MP1. Interacts with EIF5. Post-translationally, the N-terminus is blocked.

It is found in the cytoplasm. The protein resides in the cytosol. Component of the eIF2 complex that functions in the early steps of protein synthesis by forming a ternary complex with GTP and initiator tRNA. This complex binds to a 40S ribosomal subunit, followed by mRNA binding to form the 43S pre-initiation complex (43S PIC). Junction of the 60S ribosomal subunit to form the 80S initiation complex is preceded by hydrolysis of the GTP bound to eIF2 and release of an eIF2-GDP binary complex. In order for eIF2 to recycle and catalyze another round of initiation, the GDP bound to eIF2 must exchange with GTP by way of a reaction catalyzed by eIF2B. The sequence is that of Eukaryotic translation initiation factor 2 subunit 2 (EIF2S2) from Oryctolagus cuniculus (Rabbit).